A 281-amino-acid chain; its full sequence is Undecaprenyl-diphosphatase (281 aa).

7 consecutive transmembrane segments (helical) span residues 49–69, 92–112, 116–136, 152–172, 196–216, 224–244, and 257–277; these read SANTFKIVIQLGSIFAAAWIF, LHIFIGLIPAGIMGLLFDDFI, LFSVPTVLIGLALGALLMIAA, MTYKQALIIGVAQCLALWPGF, TFIMAVPIMFAASAKSLASNI, ILFYIVGFIAAFIFGVLSIRL, and FAIYRLILVAVIAVLYFGFGI.

The protein belongs to the UppP family.

It is found in the cell membrane. It catalyses the reaction di-trans,octa-cis-undecaprenyl diphosphate + H2O = di-trans,octa-cis-undecaprenyl phosphate + phosphate + H(+). In terms of biological role, catalyzes the dephosphorylation of undecaprenyl diphosphate (UPP). Confers resistance to bacitracin. The polypeptide is Undecaprenyl-diphosphatase (Macrococcus caseolyticus (strain JCSC5402) (Macrococcoides caseolyticum)).